The sequence spans 500 residues: 5-taurinomethyluridine-[tRNA] synthase subunit GTPB3, mitochondrial (500 aa).

Residues Met1–Pro73 constitute a mitochondrion transit peptide. 5,10-methylenetetrahydrofolate-binding residues include Arg53, Glu111, and Lys151. The TrmE-type G domain occupies Gly248–Lys422. GTP contacts are provided by residues Gly255–Ser262, Gly281–Asp285, Asp302–Gly305, and Asn373–Asp376. Asn258 is a K(+) binding site. Mg(2+) is bound by residues Ser262 and Thr283. Position 500 (Lys500) interacts with 5,10-methylenetetrahydrofolate.

Belongs to the TRAFAC class TrmE-Era-EngA-EngB-Septin-like GTPase superfamily. TrmE GTPase family. The cofactor is K(+).

The protein localises to the mitochondrion. The catalysed reaction is GTP + H2O = GDP + phosphate + H(+). GTPase component of the GTPBP3-MTO1 complex that catalyzes the 5-taurinomethyluridine (taum(5)U) modification at the 34th wobble position (U34) of mitochondrial tRNAs (mt-tRNAs), which plays a role in mt-tRNA decoding and mitochondrial translation. Taum(5)U formation on mammalian mt-tRNA requires the presence of both GTPBP3-mediated GTPase activity and MTO1 catalytic activity. The chain is 5-taurinomethyluridine-[tRNA] synthase subunit GTPB3, mitochondrial (gtpbp3) from Danio rerio (Zebrafish).